The chain runs to 330 residues: Phosphate acyltransferase (330 aa).

It belongs to the PlsX family. As to quaternary structure, homodimer. Probably interacts with PlsY.

It is found in the cytoplasm. It carries out the reaction a fatty acyl-[ACP] + phosphate = an acyl phosphate + holo-[ACP]. It participates in lipid metabolism; phospholipid metabolism. Catalyzes the reversible formation of acyl-phosphate (acyl-PO(4)) from acyl-[acyl-carrier-protein] (acyl-ACP). This enzyme utilizes acyl-ACP as fatty acyl donor, but not acyl-CoA. This Bacillus anthracis (strain A0248) protein is Phosphate acyltransferase.